A 440-amino-acid chain; its full sequence is Deoxyguanosinetriphosphate triphosphohydrolase-like protein (440 aa).

An HD domain is found at Arg-61–Ser-256.

This sequence belongs to the dGTPase family. Type 3 subfamily.

The sequence is that of Deoxyguanosinetriphosphate triphosphohydrolase-like protein from Synechocystis sp. (strain ATCC 27184 / PCC 6803 / Kazusa).